We begin with the raw amino-acid sequence, 281 residues long: 4-diphosphocytidyl-2-C-methyl-D-erythritol kinase (281 aa).

The active site involves Lys-11. Position 92-102 (92-102 (LVSAGLAGGSA)) interacts with ATP. The active site involves Asp-132.

This sequence belongs to the GHMP kinase family. IspE subfamily.

It carries out the reaction 4-CDP-2-C-methyl-D-erythritol + ATP = 4-CDP-2-C-methyl-D-erythritol 2-phosphate + ADP + H(+). The protein operates within isoprenoid biosynthesis; isopentenyl diphosphate biosynthesis via DXP pathway; isopentenyl diphosphate from 1-deoxy-D-xylulose 5-phosphate: step 3/6. Catalyzes the phosphorylation of the position 2 hydroxy group of 4-diphosphocytidyl-2C-methyl-D-erythritol. The sequence is that of 4-diphosphocytidyl-2-C-methyl-D-erythritol kinase from Ehrlichia ruminantium (strain Welgevonden).